Here is a 117-residue protein sequence, read N- to C-terminus: Ribosome-binding factor A (117 aa).

It belongs to the RbfA family. In terms of assembly, monomer. Binds 30S ribosomal subunits, but not 50S ribosomal subunits or 70S ribosomes.

It localises to the cytoplasm. Functionally, one of several proteins that assist in the late maturation steps of the functional core of the 30S ribosomal subunit. Associates with free 30S ribosomal subunits (but not with 30S subunits that are part of 70S ribosomes or polysomes). Required for efficient processing of 16S rRNA. May interact with the 5'-terminal helix region of 16S rRNA. This chain is Ribosome-binding factor A, found in Leuconostoc citreum (strain KM20).